The chain runs to 1871 residues: Plexin-A3 (1871 aa).

Residues 1–19 (MPSVCLLLLLFLAVGGALG) form the signal peptide. Residues 20-488 (NRPFRAFVVT…SEKQVSQLPV (469 aa)) form the Sema domain. Residues 20 to 1220 (NRPFRAFVVT…SAERALTLPA (1201 aa)) are Extracellular-facing. The N-linked (GlcNAc...) asparagine glycan is linked to Asn-59. Cystine bridges form between Cys-77-Cys-86, Cys-112-Cys-120, Cys-266-Cys-387, Cys-282-Cys-338, Cys-356-Cys-375, Cys-491-Cys-508, Cys-497-Cys-539, Cys-500-Cys-517, and Cys-511-Cys-523. N-linked (GlcNAc...) asparagine glycosylation occurs at Asn-548. Cys-574 and Cys-594 are joined by a disulfide. N-linked (GlcNAc...) asparagine glycosylation is found at Asn-637, Asn-738, and Asn-746. IPT/TIG domains follow at residues 840–933 (PRIT…YSFV), 935–1020 (PTFD…YTYT), 1023–1122 (PTVT…FTYY), and 1125–1211 (PSFE…LHIS). N-linked (GlcNAc...) asparagine glycans are attached at residues Asn-1009, Asn-1036, Asn-1073, Asn-1115, and Asn-1162. Residues 1221–1241 (MMGLAAGGGLLLLAITAVLVA) traverse the membrane as a helical segment. The Cytoplasmic portion of the chain corresponds to 1242–1871 (YKRKTQDADR…QIISLVSSDS (630 aa)). The residue at position 1596 (Ser-1596) is a Phosphoserine.

It belongs to the plexin family. Interacts with CBFA2T3/MTG16.

The protein localises to the cell membrane. Its function is as follows. Coreceptor for SEMA3A and SEMA3F. Necessary for signaling by class 3 semaphorins and subsequent remodeling of the cytoskeleton. Plays a role in axon guidance in the developing nervous system. Regulates the migration of sympathetic neurons, but not of neural crest precursors. Required for normal dendrite spine morphology in pyramidal neurons. May play a role in regulating semaphorin-mediated programmed cell death in the developing nervous system. Class 3 semaphorins bind to a complex composed of a neuropilin and a plexin. The plexin modulates the affinity of the complex for specific semaphorins, and its cytoplasmic domain is required for the activation of down-stream signaling events in the cytoplasm. The chain is Plexin-A3 (PLXNA3) from Homo sapiens (Human).